Consider the following 320-residue polypeptide: Cytochrome f (320 aa).

Residues 1–35 (MQNRNTFSWIKEQMTRSISVSIMIYVITRTAISNA) form the signal peptide. Heme contacts are provided by Tyr-36, Cys-56, Cys-59, and His-60. Residues 286–306 (VQGLLFFLASVILAQIFLVLK) form a helical membrane-spanning segment.

It belongs to the cytochrome f family. As to quaternary structure, the 4 large subunits of the cytochrome b6-f complex are cytochrome b6, subunit IV (17 kDa polypeptide, petD), cytochrome f and the Rieske protein, while the 4 small subunits are PetG, PetL, PetM and PetN. The complex functions as a dimer. Requires heme as cofactor.

The protein localises to the plastid. It is found in the chloroplast thylakoid membrane. Component of the cytochrome b6-f complex, which mediates electron transfer between photosystem II (PSII) and photosystem I (PSI), cyclic electron flow around PSI, and state transitions. This is Cytochrome f from Platanus occidentalis (Sycamore).